Consider the following 466-residue polypeptide: tRNA modification GTPase MnmE (466 aa).

Positions 25, 82, and 127 each coordinate (6S)-5-formyl-5,6,7,8-tetrahydrofolate. The region spanning 223-388 is the TrmE-type G domain; it reads GIKVVIAGQP…LRRQLLQIAG (166 aa). K(+) is bound at residue asparagine 233. GTP contacts are provided by residues 233 to 238, 252 to 258, 277 to 280, 346 to 349, and 369 to 371; these read NAGKSS, TPIAGTT, DTAG, NKAD, and SAR. Mg(2+) is bound at residue serine 237. K(+) contacts are provided by threonine 252, isoleucine 254, and threonine 257. Threonine 258 serves as a coordination point for Mg(2+). Lysine 466 serves as a coordination point for (6S)-5-formyl-5,6,7,8-tetrahydrofolate.

Belongs to the TRAFAC class TrmE-Era-EngA-EngB-Septin-like GTPase superfamily. TrmE GTPase family. Homodimer. Heterotetramer of two MnmE and two MnmG subunits. Requires K(+) as cofactor.

It is found in the cytoplasm. Functionally, exhibits a very high intrinsic GTPase hydrolysis rate. Involved in the addition of a carboxymethylaminomethyl (cmnm) group at the wobble position (U34) of certain tRNAs, forming tRNA-cmnm(5)s(2)U34. This chain is tRNA modification GTPase MnmE, found in Acidovorax sp. (strain JS42).